A 180-amino-acid polypeptide reads, in one-letter code: ATP synthase subunit b (180 aa).

A helical transmembrane segment spans residues 26-48; sequence SMILFWKAVNTVILLGLVYYFGG.

It belongs to the ATPase B chain family. In terms of assembly, F-type ATPases have 2 components, F(1) - the catalytic core - and F(0) - the membrane proton channel. F(1) has five subunits: alpha(3), beta(3), gamma(1), delta(1), epsilon(1). F(0) has three main subunits: a(1), b(2) and c(10-14). The alpha and beta chains form an alternating ring which encloses part of the gamma chain. F(1) is attached to F(0) by a central stalk formed by the gamma and epsilon chains, while a peripheral stalk is formed by the delta and b chains.

The protein localises to the cell inner membrane. Functionally, f(1)F(0) ATP synthase produces ATP from ADP in the presence of a proton or sodium gradient. F-type ATPases consist of two structural domains, F(1) containing the extramembraneous catalytic core and F(0) containing the membrane proton channel, linked together by a central stalk and a peripheral stalk. During catalysis, ATP synthesis in the catalytic domain of F(1) is coupled via a rotary mechanism of the central stalk subunits to proton translocation. Component of the F(0) channel, it forms part of the peripheral stalk, linking F(1) to F(0). This is ATP synthase subunit b from Sulfurihydrogenibium sp. (strain YO3AOP1).